The primary structure comprises 527 residues: Putative WEB family protein At4g17210 (527 aa).

Disordered stretches follow at residues 1–28 (MAKI…IDTR) and 46–70 (FSKK…TDVS). A compositionally biased stretch (low complexity) spans 55–68 (SSSSSSQSQDTTTD). Coiled coils occupy residues 95–159 (AAKA…YILI), 202–389 (SNKI…AKHM), and 436–513 (KKIR…EAHS).

The protein belongs to the WEB family.

In Arabidopsis thaliana (Mouse-ear cress), this protein is Putative WEB family protein At4g17210.